Reading from the N-terminus, the 198-residue chain is Probable chemoreceptor glutamine deamidase CheD (198 aa).

Belongs to the CheD family.

The enzyme catalyses L-glutaminyl-[protein] + H2O = L-glutamyl-[protein] + NH4(+). Its function is as follows. Probably deamidates glutamine residues to glutamate on methyl-accepting chemotaxis receptors (MCPs), playing an important role in chemotaxis. This is Probable chemoreceptor glutamine deamidase CheD from Stenotrophomonas maltophilia (strain K279a).